A 181-amino-acid polypeptide reads, in one-letter code: Adenylyl-sulfate kinase (181 aa).

ATP is bound at residue 12-19 (GLSGAGKS). Ser-86 (phosphoserine intermediate) is an active-site residue.

Belongs to the APS kinase family.

It catalyses the reaction adenosine 5'-phosphosulfate + ATP = 3'-phosphoadenylyl sulfate + ADP + H(+). Its pathway is sulfur metabolism; hydrogen sulfide biosynthesis; sulfite from sulfate: step 2/3. In terms of biological role, catalyzes the synthesis of activated sulfate. The sequence is that of Adenylyl-sulfate kinase from Microcystis aeruginosa (strain NIES-843 / IAM M-2473).